Consider the following 434-residue polypeptide: Zinc finger protein kipf (434 aa).

Residues 7–88 (NVCRTCMDET…EQSYQHFFRV (82 aa)) form the ZAD domain. Zn(2+)-binding residues include cysteine 9, cysteine 12, cysteine 61, and cysteine 64. The tract at residues 117–173 (QLKSDRQQDTQQMTKTQKPDDDLSQKQTLQAKLQEGNIDGPPESFTLHPRKRTCRTE) is disordered. The segment at 197-219 (YNCPHCSKRFCSQTQLRTHITDL) adopts a C2H2-type 1; degenerate zinc-finger fold. 3 C2H2-type zinc fingers span residues 221–243 (NRCP…LRNH), 249–271 (HKCF…LRTH), and 277–299 (LSCS…RREH). Residues 295 to 328 (HRREHKQRPGSSKSESTKDPDSDDSDQAQDLKPK) are disordered. 2 positions are modified to phosphoserine: serine 316 and serine 319. 3 consecutive C2H2-type zinc fingers follow at residues 348–370 (PICD…MLTH), 377–399 (KKCT…ERGH), and 404–427 (FRCE…KRIH).

Homodimer; mediated by the ZAD domain. Interacts (via C2H2 type zinc finger 4) with rhi/rhino (via Chromo domain). Dimerization is required for association with DNA and interaction with rhi/rhino. In terms of tissue distribution, primarily expressed in ovaries and absent from testes. In ovaries very low levels in germline stem cells and cystoblasts but abundant in developing cysts and polyploid nurse cells.

The protein resides in the nucleus. It is found in the chromosome. Its function is as follows. DNA-binding zinc finger protein that recruits chromo domain protein rhino/rhi to specific chromatin regions enriched in H3K9me2/3 histone methylation, mediating piRNA (piwi-interacting RNA) biogenesis. May bind to GC rich DNA sequences including a 5'-GRGGN-3' sequence motif. Nucleates rhi/rhino accumulation and stabilizes its expansion. Involved in piRNA transposon repression, particularly in the female ovary during oogenesis. This chain is Zinc finger protein kipf, found in Drosophila melanogaster (Fruit fly).